A 174-amino-acid polypeptide reads, in one-letter code: FMN reductase (NADH) RutF (174 aa).

This sequence belongs to the non-flavoprotein flavin reductase family. RutF subfamily.

It catalyses the reaction FMNH2 + NAD(+) = FMN + NADH + 2 H(+). In terms of biological role, catalyzes the reduction of FMN to FMNH2 which is used to reduce pyrimidine by RutA via the Rut pathway. The polypeptide is FMN reductase (NADH) RutF (Agrobacterium fabrum (strain C58 / ATCC 33970) (Agrobacterium tumefaciens (strain C58))).